Reading from the N-terminus, the 376-residue chain is Queuine tRNA-ribosyltransferase (376 aa).

Aspartate 93 serves as the catalytic Proton acceptor. Substrate is bound by residues 93–97, aspartate 147, glutamine 190, and glycine 217; that span reads DSGGF. Residues 248–254 form an RNA binding region; the sequence is GVGKPDD. Aspartate 267 acts as the Nucleophile in catalysis. Residues cysteine 305, cysteine 307, cysteine 310, and histidine 336 each coordinate Zn(2+).

Belongs to the queuine tRNA-ribosyltransferase family. As to quaternary structure, homodimer. Within each dimer, one monomer is responsible for RNA recognition and catalysis, while the other monomer binds to the replacement base PreQ1. Zn(2+) is required as a cofactor.

The enzyme catalyses 7-aminomethyl-7-carbaguanine + guanosine(34) in tRNA = 7-aminomethyl-7-carbaguanosine(34) in tRNA + guanine. It participates in tRNA modification; tRNA-queuosine biosynthesis. Its function is as follows. Catalyzes the base-exchange of a guanine (G) residue with the queuine precursor 7-aminomethyl-7-deazaguanine (PreQ1) at position 34 (anticodon wobble position) in tRNAs with GU(N) anticodons (tRNA-Asp, -Asn, -His and -Tyr). Catalysis occurs through a double-displacement mechanism. The nucleophile active site attacks the C1' of nucleotide 34 to detach the guanine base from the RNA, forming a covalent enzyme-RNA intermediate. The proton acceptor active site deprotonates the incoming PreQ1, allowing a nucleophilic attack on the C1' of the ribose to form the product. After dissociation, two additional enzymatic reactions on the tRNA convert PreQ1 to queuine (Q), resulting in the hypermodified nucleoside queuosine (7-(((4,5-cis-dihydroxy-2-cyclopenten-1-yl)amino)methyl)-7-deazaguanosine). In Ruegeria pomeroyi (strain ATCC 700808 / DSM 15171 / DSS-3) (Silicibacter pomeroyi), this protein is Queuine tRNA-ribosyltransferase.